Here is a 415-residue protein sequence, read N- to C-terminus: Zona pellucida-like domain-containing protein 1 (415 aa).

The N-terminal stretch at 1–19 (MERVWLLFLLAIRVSPGSA) is a signal peptide. Residues 20–373 (QFNSYNCDAN…PFQLNAVTSS (354 aa)) lie on the Extracellular side of the membrane. One can recognise a ZP domain in the interval 43-320 (YCGVQAITMK…PICGNRKRRD (278 aa)). Intrachain disulfides connect C44–C155 and C79–C104. N-linked (GlcNAc...) asparagine glycosylation occurs at N164. Cystine bridges form between C235-C296 and C255-C313. Residues 374-394 (LISGMVILGVLCFSLLLCSLA) form a helical membrane-spanning segment. Residues 395 to 415 (LLHRKGSTSLVLNGVRNPVFE) are Cytoplasmic-facing.

In terms of processing, proteolytically cleaved before the transmembrane segment to yield the secreted form found in the extracellular matrix of the cupula.

Its subcellular location is the cytoplasmic vesicle membrane. It localises to the secreted. The protein resides in the extracellular space. The protein localises to the extracellular matrix. Glycoprotein which is a component of the gelatinous extracellular matrix in the cupulae of the vestibular organ. In Mus musculus (Mouse), this protein is Zona pellucida-like domain-containing protein 1 (Zpld1).